The chain runs to 359 residues: 4-galactosyl-N-acetylglucosaminide 3-alpha-L-fucosyltransferase FUT6 (359 aa).

The Cytoplasmic segment spans residues 1–14 (MDPLGPAKPQWSWR). A helical; Signal-anchor for type II membrane protein membrane pass occupies residues 15–34 (CCLTTLLFQLLVAVCFFSYL). At 35-359 (RVSRDDPTVY…QTRSIAAWFT (325 aa)) the chain is on the lumenal side. Residues Asn-46, Asn-91, Asn-153, and Asn-184 are each glycosylated (N-linked (GlcNAc...) asparagine). The interval 73-112 (KPIALPRCSEMVPGTADCNITADRKVYPQADAVIVHHREV) is determines site-specific fucosylation.

It belongs to the glycosyltransferase 10 family. In terms of assembly, homodimer and monomer. Monomer (secreted form). Post-translationally, N-glycosylated. Proteolytic cleavage releases a secreted glycoform of 43 kDa.

It is found in the golgi apparatus. The protein localises to the golgi stack membrane. It localises to the secreted. It carries out the reaction a beta-D-galactosyl-(1-&gt;4)-N-acetyl-beta-D-glucosaminyl derivative + GDP-beta-L-fucose = a beta-D-galactosyl-(1-&gt;4)-[alpha-L-fucosyl-(1-&gt;3)]-N-acetyl-beta-D-glucosaminyl derivative + GDP + H(+). The enzyme catalyses an N-acetyl-alpha-neuraminyl-(2-&gt;3)-beta-D-galactosyl-(1-&gt;4)-N-acetyl-beta-D-glucosaminyl derivative + GDP-beta-L-fucose = an alpha-Neu5Ac-(2-&gt;3)-beta-D-Gal-(1-&gt;4)-[alpha-L-Fuc-(1-&gt;3)]-beta-D-GlcNAc derivative + GDP + H(+). It catalyses the reaction an alpha-Neu5Ac-(2-&gt;3)-beta-D-Gal-(1-&gt;4)-beta-D-GlcNAc-(1-&gt;3)-beta-D-Gal-(1-&gt;4)-[alpha-L-Fuc-(1-&gt;3)]-beta-D-GlcNAc derivative + GDP-beta-L-fucose = an alpha-Neu5Ac-(2-&gt;3)-beta-D-Gal-(1-&gt;4)-[alpha-L-Fuc-(1-&gt;3)]-beta-D-GlcNAc-(1-&gt;3)-beta-D-Gal-(1-&gt;4)-[alpha-L-Fuc-(1-&gt;3)]-beta-D-GlcNAc derivative + GDP + H(+). The catalysed reaction is a neolactoside nLc6Cer + GDP-beta-L-fucose = beta-D-Gal-(1-&gt;4)-[alpha-L-Fuc-(1-&gt;3)]-beta-D-GlcNAc-(1-&gt;3)-beta-D-Gal-(1-&gt;4)-beta-D-GlcNAc-(1-&gt;3)-beta-D-Gal-(1-&gt;4)-beta-D-Glc-(1&lt;-&gt;1')-Cer + GDP + H(+). It carries out the reaction a neolactoside nLc6Cer + GDP-beta-L-fucose = beta-D-galactosyl-(1-&gt;4)-N-acetyl-beta-D-glucosaminyl-(1-&gt;3)-beta-D-galactosyl-(1-&gt;4)-[alpha-L-fucosyl-(1-&gt;3)]-N-acetyl-beta-D-glucosaminyl-(1-&gt;3)-beta-D-galactosyl-(1-&gt;4)-beta-D-glucosyl-(1&lt;-&gt;1')-ceramide + GDP + H(+). The enzyme catalyses a neolactoside VI(3)-alpha-NeuNAc-nLc6Cer + GDP-beta-L-fucose = a neolactoside VI(3)-alpha-NeuAc,V(3)-alphaFuc-nLc6Cer + GDP + H(+). It catalyses the reaction beta-D-galactosyl-(1-&gt;4)-N-acetyl-D-glucosamine + GDP-beta-L-fucose = beta-D-galactosyl-(1-&gt;4)-[alpha-L-fucosyl-(1-&gt;3)]-N-acetyl-D-glucosamine + GDP + H(+). The catalysed reaction is N-acetyl-alpha-neuraminosyl-(2-&gt;3)-beta-D-galactosyl-(1-&gt;4)-N-acetyl-beta-D-glucosamine + GDP-beta-L-fucose = N-acetyl-alpha-neuraminosyl-(2-&gt;3)-beta-D-galactosyl-(1-&gt;4)-[alpha-L-fucosyl-(1-&gt;3)]-N-acetyl-beta-D-glucosamine + GDP + H(+). It carries out the reaction lactose + GDP-beta-L-fucose = beta-D-galactosyl-(1-&gt;4)-[alpha-L-fucosyl-(1-&gt;3)]-D-glucose + GDP + H(+). The enzyme catalyses alpha-L-Fuc-(1-&gt;2)-beta-D-Gal-(1-&gt;4)-D-Glc + GDP-beta-L-fucose = alpha-L-Fuc-(1-&gt;2)-beta-D-Gal-(1-&gt;4)-[alpha-L-Fuc-(1-&gt;3)]-D-Glc + GDP + H(+). It catalyses the reaction a beta-D-galactosyl-(1-&gt;4)-N-acetyl-beta-D-6-sulfooxy-glucosaminyl derivative + GDP-beta-L-fucose = a beta-D-galactosyl-(1-&gt;4)-[alpha-L-fucosyl-(1-&gt;3)]-N-acetyl-beta-D-6-sulfooxy-glucosaminyl derivative + GDP + H(+). It functions in the pathway protein modification; protein glycosylation. In terms of biological role, catalyzes the transfer of L-fucose, from a guanosine diphosphate-beta-L-fucose, to the N-acetyl glucosamine (GlcNAc) of a distal alpha2,3 sialylated lactosamine unit of a glycoprotein- or glycolipid-linked sialopolylactosamines chain or of a distal or internal lactosamine unit of a neutral glycoprotein- or glycolipid-linked polylactosamines chain through an alpha-1,3 glycosidic linkage and participates in surface expression of the sialyl Lewis X (sLe(x)), Lewis X (Le(x)) and non sialylated VIM2 determinants. Moreover transfers fucose to H-type 2 (Fucalpha1-2Galbeta1-4GlcNAc) chain acceptor substrates and participates in difucosylated sialyl Lewis x determinants. Also fucosylates a polylactosamine substrate having a 6 sulfate modification at the GlcNAc moiety and gives rise to sialyl and non-sialyl 6-sulfo lewis X. Does not have activity towards type 1 ((Galbeta1-3GlcNAc)) and H-type 1 chain (Fucalpha1-2Galbeta1-3GlcNAc) acceptors substrates. The polypeptide is 4-galactosyl-N-acetylglucosaminide 3-alpha-L-fucosyltransferase FUT6 (Pan troglodytes (Chimpanzee)).